Reading from the N-terminus, the 233-residue chain is Biosynthetic peptidoglycan transglycosylase (233 aa).

A helical membrane pass occupies residues 8 to 28 (LIALPVGIFIFFNAYVYGNII).

The protein belongs to the glycosyltransferase 51 family.

The protein localises to the cell inner membrane. The catalysed reaction is [GlcNAc-(1-&gt;4)-Mur2Ac(oyl-L-Ala-gamma-D-Glu-L-Lys-D-Ala-D-Ala)](n)-di-trans,octa-cis-undecaprenyl diphosphate + beta-D-GlcNAc-(1-&gt;4)-Mur2Ac(oyl-L-Ala-gamma-D-Glu-L-Lys-D-Ala-D-Ala)-di-trans,octa-cis-undecaprenyl diphosphate = [GlcNAc-(1-&gt;4)-Mur2Ac(oyl-L-Ala-gamma-D-Glu-L-Lys-D-Ala-D-Ala)](n+1)-di-trans,octa-cis-undecaprenyl diphosphate + di-trans,octa-cis-undecaprenyl diphosphate + H(+). It participates in cell wall biogenesis; peptidoglycan biosynthesis. Functionally, peptidoglycan polymerase that catalyzes glycan chain elongation from lipid-linked precursors. The protein is Biosynthetic peptidoglycan transglycosylase of Neisseria meningitidis serogroup C (strain 053442).